The chain runs to 168 residues: MKKFFAIAVLAGSVVTTAHSSLLNLKSMVEAITHRNSILSFVGYGCYCGLGGRGHPMDEVDWCCHAHDCCYEKLFEQGCRPYVDHYDHRIENGTMIVCTELNETECDKQTCECDKSLTLCLKDHPYRNKYRGYFNVYCQGPTPNCSIYDPYPEEVTCGHGLPATPVST.

The N-terminal stretch at 1–20 is a signal peptide; sequence MKKFFAIAVLAGSVVTTAHS. Intrachain disulfides connect cysteine 46/cysteine 138, cysteine 48/cysteine 64, cysteine 63/cysteine 120, cysteine 69/cysteine 145, cysteine 70/cysteine 113, cysteine 79/cysteine 106, and cysteine 98/cysteine 111. 3 residues coordinate Ca(2+): tyrosine 47, glycine 49, and glycine 51. The active site involves histidine 67. Ca(2+) is bound at residue aspartate 68. Residues asparagine 92 and asparagine 102 are each glycosylated (N-linked (GlcNAc...) asparagine). Residue aspartate 114 is part of the active site. The segment at 139-168 is required for localization on the plasma membrane; that stretch reads QGPTPNCSIYDPYPEEVTCGHGLPATPVST. Asparagine 144 is a glycosylation site (N-linked (GlcNAc...) asparagine).

This sequence belongs to the phospholipase A2 family. Requires Ca(2+) as cofactor. As to expression, strongly expressed in testis.

It localises to the secreted. The protein localises to the cell membrane. It catalyses the reaction a 1,2-diacyl-sn-glycero-3-phosphocholine + H2O = a 1-acyl-sn-glycero-3-phosphocholine + a fatty acid + H(+). It carries out the reaction 1-hexadecanoyl-2-(9Z-octadecenoyl)-sn-glycero-3-phospho-(1'-sn-glycerol) + H2O = 1-hexadecanoyl-sn-glycero-3-phospho-(1'-sn-glycerol) + (9Z)-octadecenoate + H(+). The catalysed reaction is 1-hexadecanoyl-2-(9Z,12Z-octadecadienoyl)-sn-glycero-3-phosphoethanolamine + H2O = 1-hexadecanoyl-sn-glycero-3-phosphoethanolamine + (9Z,12Z)-octadecadienoate + H(+). The enzyme catalyses 1-hexadecanoyl-2-(5Z,8Z,11Z,14Z-eicosatetraenoyl)-sn-glycero-3-phosphoethanolamine + H2O = 1-hexadecanoyl-sn-glycero-3-phosphoethanolamine + (5Z,8Z,11Z,14Z)-eicosatetraenoate + H(+). It catalyses the reaction 1-hexadecanoyl-2-(9Z-octadecenoyl)-sn-glycero-3-phosphocholine + H2O = 1-hexadecanoyl-sn-glycero-3-phosphocholine + (9Z)-octadecenoate + H(+). It carries out the reaction 1-hexadecanoyl-2-(9Z-octadecenoyl)-sn-glycero-3-phospho-L-serine + H2O = 1-hexadecanoyl-sn-glycero-3-phospho-L-serine + (9Z)-octadecenoate + H(+). Functionally, secretory calcium-dependent phospholipase A2 that primarily targets extracellular phospholipids. Hydrolyzes the ester bond of the fatty acyl group attached at the sn-2 position of phospholipids (phospholipase A2 activity), the catalytic efficiency decreasing in the following order: phosphatidylglycerols &gt; phosphatidylethanolamines &gt; phosphatidylcholines &gt; phosphatidylserines. May play a role in lipid mediator production in inflammatory conditions, by providing arachidonic acid to downstream cyclooxygenases and lipoxygenases. The polypeptide is Group IIF secretory phospholipase A2 (Pla2g2f) (Mus musculus (Mouse)).